The following is an 857-amino-acid chain: DNA mismatch repair protein MutS (857 aa).

613-620 (GPNMGGKS) serves as a coordination point for ATP. The segment at 797–820 (TSLPHEQPAAHKAKDAPQVPHQSD) is disordered.

This sequence belongs to the DNA mismatch repair MutS family.

Functionally, this protein is involved in the repair of mismatches in DNA. It is possible that it carries out the mismatch recognition step. This protein has a weak ATPase activity. The protein is DNA mismatch repair protein MutS of Pseudomonas putida (strain ATCC 47054 / DSM 6125 / CFBP 8728 / NCIMB 11950 / KT2440).